A 398-amino-acid chain; its full sequence is Phosphoglycerate kinase (398 aa).

Substrate contacts are provided by residues 21–23 (DFN), R36, 59–62 (HLGR), R119, and R157. Residues K208, G296, E327, and 354 to 357 (GGDS) each bind ATP.

Belongs to the phosphoglycerate kinase family. In terms of assembly, monomer.

It is found in the cytoplasm. It catalyses the reaction (2R)-3-phosphoglycerate + ATP = (2R)-3-phospho-glyceroyl phosphate + ADP. Its pathway is carbohydrate degradation; glycolysis; pyruvate from D-glyceraldehyde 3-phosphate: step 2/5. The polypeptide is Phosphoglycerate kinase (Streptococcus pneumoniae serotype 4 (strain ATCC BAA-334 / TIGR4)).